Reading from the N-terminus, the 354-residue chain is Probable L-ascorbate-6-phosphate lactonase UlaG (354 aa).

The protein belongs to the UlaG family. A divalent metal cation is required as a cofactor.

It localises to the cytoplasm. The catalysed reaction is L-ascorbate 6-phosphate + H2O = 3-dehydro-L-gulonate 6-phosphate. Its pathway is cofactor degradation; L-ascorbate degradation; D-xylulose 5-phosphate from L-ascorbate: step 1/4. In terms of biological role, probably catalyzes the hydrolysis of L-ascorbate-6-P into 3-keto-L-gulonate-6-P. Is essential for L-ascorbate utilization under anaerobic conditions. The polypeptide is Probable L-ascorbate-6-phosphate lactonase UlaG (Escherichia coli (strain SMS-3-5 / SECEC)).